The following is a 386-amino-acid chain: Large ribosomal subunit protein uL4 (386 aa).

Positions 341 to 357 (VEQRRLKEKQAKLDQKR) are enriched in basic and acidic residues. The segment at 341–386 (VEQRRLKEKQAKLDQKRGIATPVEGAGKGRPRKTTAKPTKAKAGKK) is disordered. Over residues 369–386 (GRPRKTTAKPTKAKAGKK) the composition is skewed to basic residues.

This sequence belongs to the universal ribosomal protein uL4 family.

The sequence is that of Large ribosomal subunit protein uL4 (RPL4) from Urechis caupo (Innkeeper worm).